Here is a 177-residue protein sequence, read N- to C-terminus: Ribosome maturation factor RimM (177 aa).

The 74-residue stretch at 101–174 (EGEFHLLDLV…WLLLTPPPGL (74 aa)) folds into the PRC barrel domain.

It belongs to the RimM family. In terms of assembly, binds ribosomal protein uS19.

It localises to the cytoplasm. Its function is as follows. An accessory protein needed during the final step in the assembly of 30S ribosomal subunit, possibly for assembly of the head region. Essential for efficient processing of 16S rRNA. May be needed both before and after RbfA during the maturation of 16S rRNA. It has affinity for free ribosomal 30S subunits but not for 70S ribosomes. This is Ribosome maturation factor RimM from Synechococcus sp. (strain CC9605).